A 260-amino-acid polypeptide reads, in one-letter code: GTP cyclohydrolase FolE2 (260 aa).

This sequence belongs to the GTP cyclohydrolase IV family.

The enzyme catalyses GTP + H2O = 7,8-dihydroneopterin 3'-triphosphate + formate + H(+). Its pathway is cofactor biosynthesis; 7,8-dihydroneopterin triphosphate biosynthesis; 7,8-dihydroneopterin triphosphate from GTP: step 1/1. Functionally, converts GTP to 7,8-dihydroneopterin triphosphate. The protein is GTP cyclohydrolase FolE2 of Desulfovibrio desulfuricans (strain ATCC 27774 / DSM 6949 / MB).